Here is a 154-residue protein sequence, read N- to C-terminus: RING finger protein 11 (154 aa).

The segment covering 1-12 (MGNCLKSPTSDD) has biased composition (polar residues). The disordered stretch occupies residues 1–52 (MGNCLKSPTSDDISLLHESQSDRASFGEGTEPDQEPPPPYQEQVPVPIYHPT). Gly2 carries N-myristoyl glycine lipidation. Residue Cys4 is the site of S-palmitoyl cysteine attachment. Phosphoserine is present on residues Ser14 and Ser25. The PPxY motif signature appears at 37-40 (PPPY). The RING-type zinc finger occupies 99–140 (CVICMMDFVYGDPIRFLPCMHIYHLDCIDDWLMRSFTCPSCM). Thr135 is modified (phosphothreonine; by PKB/AKT1).

As to quaternary structure, interacts (when phosphorylated) with 14-3-3. Interacts with the E3 ubiquitin-ligases NEDD4, ITCH, SMURF2 and WWP1. Also interacts with the E2 ubiquitin-conjugating enzymes UBE2D1 and UBE2N, but neither with CDC34, nor with UBE2L3. Interacts with ZNF350, EPS15 and STAMBP. After TNF stimulation, interacts with TAX1BP1, TNFAIP3 and RIPK1; these interactions are transient and they are lost after 1 hour of stimulation with TNF. Interacts with GGA1. Post-translationally, ubiquitinated in the presence of ITCH, SMURF2 and UBE2D1, as well as WWP1. In terms of processing, phosphorylation by PKB/AKT1 may accelerate degradation by the proteasome. Acylation at both Gly-2 and Cys-4 is required for proper localization to the endosomes.

Its subcellular location is the early endosome. It localises to the recycling endosome. The protein localises to the cytoplasm. The protein resides in the nucleus. Functionally, essential component of a ubiquitin-editing protein complex, comprising also TNFAIP3, ITCH and TAX1BP1, that ensures the transient nature of inflammatory signaling pathways. Promotes the association of TNFAIP3 to RIPK1 after TNF stimulation. TNFAIP3 deubiquitinates 'Lys-63' polyubiquitin chains on RIPK1 and catalyzes the formation of 'Lys-48'-polyubiquitin chains. This leads to RIPK1 proteasomal degradation and consequently termination of the TNF- or LPS-mediated activation of NF-kappa-B. Recruits STAMBP to the E3 ubiquitin-ligase SMURF2 for ubiquitination, leading to its degradation by the 26S proteasome. The polypeptide is RING finger protein 11 (Rnf11) (Mus musculus (Mouse)).